The following is a 1176-amino-acid chain: Myosin light chain kinase, smooth muscle (1176 aa).

Residues 1 to 41 (MDFRANLQRQVKPKTLSEEERKVHGPQQVDFRSVLAKKGTP) form an actin-binding (calcium/calmodulin-sensitive) region. The disordered stretch occupies residues 1 to 354 (MDFRANLQRQ…SEKRPESRGT (354 aa)). Residues 26–41 (PQQVDFRSVLAKKGTP) form a calmodulin-binding region. Residues 43 to 55 (TPVPEKVPPPKPA) show a composition bias toward pro residues. 16 tandem repeats follow at residues 100–111 (FLKPVGNAKLAD), 112–123 (TPKPLSSTKPAE), 124–135 (TPKPLGNVKPAE), 136–147 (TPKPLGSTKPAE), 148–159 (TPKPLGSTKPAE), 160–171 (TPKPLGNVKPAE), 172–183 (TPKPLGNIKPTE), 184–195 (TPKPLGSTKPAE), 196–207 (TPKPLGSTKPAE), 208–219 (TPKPLGNVKPAE), 220–231 (TPKPLGNVKPAE), 232–243 (TPKPLGNVKPAE), 244–255 (TPKPVSNAKPAE), 256–267 (TLKPVGNAKPAE), 268–279 (TPKPLSNVKPAE), and 280–291 (TPKLVGNAKPAE). Residues 100–291 (FLKPVGNAKL…KLVGNAKPAE (192 aa)) form a 16 X 12 AA tandem repeats region. The residue at position 202 (S202) is a Phosphoserine. The actin-binding (calcium/calmodulin-insensitive) stretch occupies residues 319–721 (PTGKEELKKE…TVTVNTEQKV (403 aa)). A compositionally biased stretch (basic and acidic residues) spans 320–335 (TGKEELKKEIKNDVNC). Residues 356–444 (PTFEEKLQDL…GQAESSCQVT (89 aa)) enclose the Ig-like C2-type 1 domain. An intrachain disulfide couples C377 to C428. The disordered stretch occupies residues 448–497 (PDAPTSENAKAPEMKARRPKSSLPPVLGTESDATVKKKPAPKTPPKAAMP). The Ig-like C2-type 2 domain maps to 498 to 586 (PQIIQFPEDQ…GSRQAQVNLT (89 aa)). The Fibronectin type-III domain occupies 594 to 686 (PAGTPCASDI…QESELTALGE (93 aa)). A disordered region spans residues 673–707 (SEPSQESELTALGEKPEEEPKDEVEVSDDDEKEPE). Acidic residues predominate over residues 688 to 706 (PEEEPKDEVEVSDDDEKEP). Residue S699 is modified to Phosphoserine. At Y710 the chain carries Phosphotyrosine; by ABL1. The 256-residue stretch at 725–980 (YDIEERLGSG…CTQCLQHPWL (256 aa)) folds into the Protein kinase domain. Residues 731-739 (LGSGKFGQV) and K754 each bind ATP. A Phosphotyrosine; by ABL1 modification is found at Y836. Catalysis depends on D846, which acts as the Proton acceptor. The residue at position 896 (Y896) is a Phosphotyrosine; by ABL1. A calmodulin-binding region spans residues 972-1035 (TQCLQHPWLM…SGLSGRKSST (64 aa)). A phosphoserine mark is found at S1020, S1021, S1033, S1034, and S1037. T1039 is modified (phosphothreonine). S1040 carries the post-translational modification Phosphoserine. The 90-residue stretch at 1069–1158 (PYFSKTIRDL…GEATCTAELI (90 aa)) folds into the Ig-like C2-type 3 domain. C1090 and C1142 are oxidised to a cystine.

It belongs to the protein kinase superfamily. CAMK Ser/Thr protein kinase family. In terms of assembly, all isoforms including Telokin bind calmodulin. Interacts with SVIL. Interacts with CTTN; this interaction is reduced during thrombin-induced endothelial cell (EC) contraction but is promoted by the barrier-protective agonist sphingosine 1-phosphate (S1P) within lamellipodia. A complex made of ABL1, CTTN and MYLK regulates cortical actin-based cytoskeletal rearrangement critical to sphingosine 1-phosphate (S1P)-mediated endothelial cell (EC) barrier enhancement. Binds to NAA10/ARD1 and PTK2B/PYK2. Requires Mg(2+) as cofactor. Ca(2+) is required as a cofactor. Post-translationally, the C-terminus is deglutamylated by AGTPBP1/CCP1, AGBL1/CCP4 and AGBL4/CCP6, leading to the formation of Myosin light chain kinase, smooth muscle, deglutamylated form. The consequences of C-terminal deglutamylation are unknown. Can probably be down-regulated by phosphorylation. Tyrosine phosphorylation by ABL1 increases kinase activity, reverses MLCK-mediated inhibition of Arp2/3-mediated actin polymerization, and enhances CTTN-binding. Phosphorylation by SRC promotes CTTN binding.

It is found in the cytoplasm. The protein resides in the cell projection. It localises to the lamellipodium. Its subcellular location is the cleavage furrow. The protein localises to the cytoskeleton. It is found in the stress fiber. The enzyme catalyses L-seryl-[myosin light chain] + ATP = O-phospho-L-seryl-[myosin light chain] + ADP + H(+). The catalysed reaction is L-threonyl-[myosin light chain] + ATP = O-phospho-L-threonyl-[myosin light chain] + ADP + H(+). Functionally, calcium/calmodulin-dependent myosin light chain kinase implicated in smooth muscle contraction via phosphorylation of myosin light chains (MLC). Also regulates actin-myosin interaction through a non-kinase activity. Phosphorylates PTK2B/PYK2 and myosin light-chains. Involved in the inflammatory response (e.g. apoptosis, vascular permeability, leukocyte diapedesis), cell motility and morphology, airway hyperreactivity and other activities relevant to asthma. Required for tonic airway smooth muscle contraction that is necessary for physiological and asthmatic airway resistance. Necessary for gastrointestinal motility. Implicated in the regulation of endothelial as well as vascular permeability, probably via the regulation of cytoskeletal rearrangements. In the nervous system it has been shown to control the growth initiation of astrocytic processes in culture and to participate in transmitter release at synapses formed between cultured sympathetic ganglion cells. Critical participant in signaling sequences that result in fibroblast apoptosis. Plays a role in the regulation of epithelial cell survival. Required for epithelial wound healing, especially during actomyosin ring contraction during purse-string wound closure. Mediates RhoA-dependent membrane blebbing. Triggers TRPC5 channel activity in a calcium-dependent signaling, by inducing its subcellular localization at the plasma membrane. Promotes cell migration (including tumor cells) and tumor metastasis. PTK2B/PYK2 activation by phosphorylation mediates ITGB2 activation and is thus essential to trigger neutrophil transmigration during acute lung injury (ALI). May regulate optic nerve head astrocyte migration. Probably involved in mitotic cytoskeletal regulation. Regulates tight junction probably by modulating ZO-1 exchange in the perijunctional actomyosin ring. Mediates burn-induced microvascular barrier injury; triggers endothelial contraction in the development of microvascular hyperpermeability by phosphorylating MLC. Essential for intestinal barrier dysfunction. Mediates Giardia spp.-mediated reduced epithelial barrier function during giardiasis intestinal infection via reorganization of cytoskeletal F-actin and tight junctional ZO-1. Necessary for hypotonicity-induced Ca(2+) entry and subsequent activation of volume-sensitive organic osmolyte/anion channels (VSOAC) in cervical cancer cells. This is Myosin light chain kinase, smooth muscle (MYLK) from Bos taurus (Bovine).